The primary structure comprises 502 residues: Glycerol kinase (502 aa).

An ADP-binding site is contributed by T14. ATP contacts are provided by T14, T15, and S16. Residue T14 participates in sn-glycerol 3-phosphate binding. R18 contributes to the ADP binding site. R84, E85, Y136, and D246 together coordinate sn-glycerol 3-phosphate. Positions 84, 85, 136, 246, and 247 each coordinate glycerol. Residues T268 and G311 each contribute to the ADP site. Residues T268, G311, Q315, and G412 each coordinate ATP. G412 and N416 together coordinate ADP.

The protein belongs to the FGGY kinase family.

It catalyses the reaction glycerol + ATP = sn-glycerol 3-phosphate + ADP + H(+). It functions in the pathway polyol metabolism; glycerol degradation via glycerol kinase pathway; sn-glycerol 3-phosphate from glycerol: step 1/1. Its activity is regulated as follows. Inhibited by fructose 1,6-bisphosphate (FBP). Functionally, key enzyme in the regulation of glycerol uptake and metabolism. Catalyzes the phosphorylation of glycerol to yield sn-glycerol 3-phosphate. In Pasteurella multocida (strain Pm70), this protein is Glycerol kinase.